Here is a 203-residue protein sequence, read N- to C-terminus: MKTFLPCLFFLLILVGCAQRPTPPATKTADWAAHQQQLNDLTDWSLRGKIAIITPENRHSLNIYWQQSGDNFHITLTSFLGSTILDVKKTALSTRIIDDQGKIYFGKNTQTLMTRLSGIELPVEVLQQWIKGNPIGAVYQLNENNQLVSLTGQDNKNENWSANYQDYKTVQEISLPHQLKLTRQDLLIKFAIQKWLLEKTEIF.

An N-terminal signal peptide occupies residues 1-16 (MKTFLPCLFFLLILVG). Cys17 carries N-palmitoyl cysteine lipidation. Cys17 is lipidated: S-diacylglycerol cysteine.

It belongs to the LolB family. In terms of assembly, monomer.

It localises to the cell outer membrane. Functionally, plays a critical role in the incorporation of lipoproteins in the outer membrane after they are released by the LolA protein. The polypeptide is Outer-membrane lipoprotein LolB (Psychromonas ingrahamii (strain DSM 17664 / CCUG 51855 / 37)).